The sequence spans 577 residues: Sensor protein ChvG (577 aa).

At 1–29 (MRGQRRWAHPFTLIRRLFGNAVFSSLTRR) the chain is on the cytoplasmic side. A helical membrane pass occupies residues 30–50 (IVFFNLVALVVLVGGIMYLNQ). At 51–260 (FREGLIDARV…DIDKIVHAER (210 aa)) the chain is on the periplasmic side. A helical membrane pass occupies residues 261 to 281 (LAIIRVFGVAALVNVILSLLL). Topologically, residues 282–577 (SSTIANPLRR…VLSLPAGPHP (296 aa)) are cytoplasmic. Residues 283–339 (STIANPLRRLSAAAIRVRRGGAKEREEIPDFSSRQDEIGNLSVALREMTTALYDRIA) enclose the HAMP domain. One can recognise a Histidine kinase domain in the interval 347-575 (DVSHELKNPL…RFVLSLPAGP (229 aa)). Residue H350 is modified to Phosphohistidine.

As to quaternary structure, homodimer.

The protein localises to the cell inner membrane. The catalysed reaction is ATP + protein L-histidine = ADP + protein N-phospho-L-histidine.. Its pathway is glycan metabolism; exopolysaccharide biosynthesis. Member of a two-component regulatory system ChvG(ExoS)/ChvI involved in regulating the production of succinoglycan. Activates ChvI by phosphorylation. This Rhizobium meliloti (strain 1021) (Ensifer meliloti) protein is Sensor protein ChvG (chvG).